Here is a 25-residue protein sequence, read N- to C-terminus: Antimicrobial peptide 3 (25 aa).

In terms of tissue distribution, skin.

It is found in the secreted. Functionally, has antibacterial activity against Gram-positive bacterium S.aureus and Gram-negative bacterium E.coli, when in combination with XT1 and XT6. In Xenopus tropicalis (Western clawed frog), this protein is Antimicrobial peptide 3.